Reading from the N-terminus, the 147-residue chain is MGFIFSKSMNESMKNQKEFMLMNARLQLERQLIMQSEMRERQMAMQIAWSREFLKYFGTFFGLAAISLTAGAIKKKKPAFLVPIVPLSFILTYQYDLGYGTLLERMKGEAEDILETEKSKLQLPRGMITFESIEKARKEQSRFFIDK.

The Extracellular portion of the chain corresponds to 1-52 (MGFIFSKSMNESMKNQKEFMLMNARLQLERQLIMQSEMRERQMAMQIAWSRE). The helical transmembrane segment at 53 to 73 (FLKYFGTFFGLAAISLTAGAI) threads the bilayer. Topologically, residues 74–78 (KKKKP) are cytoplasmic. Residues 79–99 (AFLVPIVPLSFILTYQYDLGY) traverse the membrane as a helical segment. Residues 100–147 (GTLLERMKGEAEDILETEKSKLQLPRGMITFESIEKARKEQSRFFIDK) lie on the Extracellular side of the membrane.

In terms of assembly, interacts with PLAT and PLAUR. Expressed in peripheral blood cells and monocytes. Expressed in adrenal medulla.

It localises to the cell membrane. Its function is as follows. Receptor for plasminogen. Regulates urokinase plasminogen activator-dependent and stimulates tissue-type plasminogen activator-dependent cell surface plasminogen activation. Proposed to be part of a local catecholaminergic cell plasminogen activation system that regulates neuroendocrine prohormone processing. Involved in regulation of inflammatory response; regulates monocyte chemotactic migration and matrix metalloproteinase activation, such as of MMP2 and MMP9. The protein is Plasminogen receptor (KT) (PLGRKT) of Homo sapiens (Human).